Here is a 247-residue protein sequence, read N- to C-terminus: Fibroblast growth factor 14 (247 aa).

Disordered stretches follow at residues 1–38 (MAAA…KNRG) and 214–247 (VGET…SKTT). The segment covering 15–25 (QAREQHWDRPS) has biased composition (basic and acidic residues).

The protein belongs to the heparin-binding growth factors family. Interacts with SCN8A. Nervous system.

The protein localises to the nucleus. Functionally, probably involved in nervous system development and function. In Homo sapiens (Human), this protein is Fibroblast growth factor 14 (FGF14).